Here is a 401-residue protein sequence, read N- to C-terminus: Collagen and calcium-binding EGF domain-containing protein 1 (401 aa).

An N-terminal signal peptide occupies residues 1-22 (MIYPGRGASLSVAVALVLFSSG). The EGF-like; calcium-binding domain occupies 126–167 (DIDECANNNETVCSQMCVNTPGSYRCDCHSGFYLEDDGKTCT). Disulfide bonds link cysteine 130-cysteine 142, cysteine 138-cysteine 151, and cysteine 153-cysteine 166. Residue asparagine 134 is glycosylated (N-linked (GlcNAc...) asparagine). 2 disordered regions span residues 229-321 (TTNS…PGSF) and 344-401 (SRPL…DWPV). 2 consecutive Collagen-like domains span residues 234–276 (LPGP…PIGP) and 286–319 (GRRGPVGPPGAPGRDGMKGERGFPGPSGPPGPPG). A compositionally biased stretch (pro residues) spans 235 to 244 (PGPPGPPGPA). Residues 246-258 (TPGAKGSSGSPGQ) show a composition bias toward low complexity.

Belongs to the CCBE1 family. In terms of tissue distribution, not expressed in blood or lymphatic endothelial cells, correlating spatially and temporally with the migration routes of endothelial cells that bud from the PCV, migrate in association with somite boundaries and seed the horizontal myoseptum region from where lymphatic precursors later migrate.

The protein resides in the secreted. Required for lymphangioblast budding and angiogenic sprouting from venous endothelium during embryogenesis. Required for the formation of facial lymphatic structures. Necessary for lymphangiogenesis, but is probably not part of either the vegfc-vegfr3 signaling or sox18-prox1 transcriptional pathways. This chain is Collagen and calcium-binding EGF domain-containing protein 1 (ccbe1), found in Danio rerio (Zebrafish).